A 257-amino-acid chain; its full sequence is Phosphatidylglycerol--prolipoprotein diacylglyceryl transferase (257 aa).

A run of 4 helical transmembrane segments spans residues 8–28 (IFGL…ILAY), 48–68 (VFIV…VIFN), 84–104 (EGGL…YLMS), and 109–129 (LNFL…QAIG). Arginine 130 lines the a 1,2-diacyl-sn-glycero-3-phospho-(1'-sn-glycerol) pocket. Helical transmembrane passes span 169–189 (PTFL…LLIT), 196–216 (GSIF…IEGL), and 225–245 (SLRM…ILII).

It belongs to the Lgt family.

It localises to the cell membrane. The catalysed reaction is L-cysteinyl-[prolipoprotein] + a 1,2-diacyl-sn-glycero-3-phospho-(1'-sn-glycerol) = an S-1,2-diacyl-sn-glyceryl-L-cysteinyl-[prolipoprotein] + sn-glycerol 1-phosphate + H(+). Its pathway is protein modification; lipoprotein biosynthesis (diacylglyceryl transfer). Functionally, catalyzes the transfer of the diacylglyceryl group from phosphatidylglycerol to the sulfhydryl group of the N-terminal cysteine of a prolipoprotein, the first step in the formation of mature lipoproteins. The protein is Phosphatidylglycerol--prolipoprotein diacylglyceryl transferase of Clostridium novyi (strain NT).